Reading from the N-terminus, the 360-residue chain is MTTTLQQRSSANVWERFCTWITSTENRIYVGWFGVLMIPTLLAATVCFIIAFVAAPPVDIDGIREPVAGSLIYGNNIISGAVVPSSNAIGLHFYPIWEAASLDEWLYNGGPYQLVVFHFLIGCACYLGRQWELSYRLGMRPWICVAYSAPLASATAVFLIYPIGQGSFSDGMPLGISGTFNFMIVFQAEHNILMHPFHMLGVAGVFGGSLFSAMHGSLVTSSLVRETTEVESQNYGYKFGQEEETYNIVAAHGYFGRLIFQYASFNNSRQLHFFLAAWPVIGIWFTALGVSTMAFNLNGFNFNQSIIDSQGRVINTWADIINRANLGMEVMHERNAHNFPLDLAAGEVAPVALTAPAING.

A run of 3 helical transmembrane segments spans residues Y29 to V46, H118 to L133, and W142 to A156. H118 contacts chlorophyll a. Residue Y126 coordinates pheophytin a. The [CaMn4O5] cluster site is built by D170 and E189. The chain crosses the membrane as a helical span at residues F197 to L218. Position 198 (H198) interacts with chlorophyll a. A quinone-binding positions include H215 and S264–F265. Residue H215 participates in Fe cation binding. H272 is a Fe cation binding site. The chain crosses the membrane as a helical span at residues F274 to L288. The [CaMn4O5] cluster site is built by H332, E333, D342, and A344. The propeptide occupies A345–G360.

The protein belongs to the reaction center PufL/M/PsbA/D family. As to quaternary structure, PSII is composed of 1 copy each of membrane proteins PsbA, PsbB, PsbC, PsbD, PsbE, PsbF, PsbH, PsbI, PsbJ, PsbK, PsbL, PsbM, PsbT, PsbX, PsbY, PsbZ, Psb30/Ycf12, peripheral proteins PsbO, CyanoQ (PsbQ), PsbU, PsbV and a large number of cofactors. It forms dimeric complexes. The cofactor is The D1/D2 heterodimer binds P680, chlorophylls that are the primary electron donor of PSII, and subsequent electron acceptors. It shares a non-heme iron and each subunit binds pheophytin, quinone, additional chlorophylls, carotenoids and lipids. D1 provides most of the ligands for the Mn4-Ca-O5 cluster of the oxygen-evolving complex (OEC). There is also a Cl(-1) ion associated with D1 and D2, which is required for oxygen evolution. The PSII complex binds additional chlorophylls, carotenoids and specific lipids.. Tyr-161 forms a radical intermediate that is referred to as redox-active TyrZ, YZ or Y-Z. In terms of processing, C-terminally processed by CtpA; processing is essential to allow assembly of the oxygen-evolving complex and thus photosynthetic growth.

The protein resides in the cellular thylakoid membrane. It carries out the reaction 2 a plastoquinone + 4 hnu + 2 H2O = 2 a plastoquinol + O2. Photosystem II (PSII) is a light-driven water:plastoquinone oxidoreductase that uses light energy to abstract electrons from H(2)O, generating O(2) and a proton gradient subsequently used for ATP formation. It consists of a core antenna complex that captures photons, and an electron transfer chain that converts photonic excitation into a charge separation. The D1/D2 (PsbA/PsbD) reaction center heterodimer binds P680, the primary electron donor of PSII as well as several subsequent electron acceptors. The sequence is that of Photosystem II protein D1 3 from Trichormus variabilis (strain ATCC 29413 / PCC 7937) (Anabaena variabilis).